A 186-amino-acid polypeptide reads, in one-letter code: Ribosomal RNA small subunit methyltransferase G (186 aa).

S-adenosyl-L-methionine is bound by residues glycine 59, phenylalanine 64, 110–111 (IE), and arginine 124.

Belongs to the methyltransferase superfamily. RNA methyltransferase RsmG family.

It localises to the cytoplasm. The catalysed reaction is guanosine(527) in 16S rRNA + S-adenosyl-L-methionine = N(7)-methylguanosine(527) in 16S rRNA + S-adenosyl-L-homocysteine. Specifically methylates the N7 position of guanine in position 527 of 16S rRNA. In Campylobacter curvus (strain 525.92), this protein is Ribosomal RNA small subunit methyltransferase G.